We begin with the raw amino-acid sequence, 417 residues long: MSQPPINPLGQPQVPAAASPSGQPSVVKRLKTSSTGLFKRFITVPDKYPKMRYVYDTGIIALAAIAILSILLTASGNSLMLYALAPALALGALGVTLLISDILDSPKAKKIGEAITAIVVPIIVLAIAAGLIAGAFVASSGTMLVFANPMFVMGLITVGLYFMSLNKLTLDYFRREHLLRMEKKTQETAEPILVTPSADDAKKIAVEKKKDLSASARMEEHEASQRQDARHRRIGREAQGSFFYSSRNPEHRRSFGSLSRFKTKPSDAASTRPASISPPFKDDFQPYHFKDLRSSSFGSGASSAFTPIMPASSRSPNFSTGTVLHPEPVYPKGGKEPSIPRVSSSSRRSPRDRQDKQQQQQNQDEEQKQQSKKKSGKSNQSLKTPPPDGKSTANLSPSNPFSDGYDEREKRKHRKNK.

The tract at residues 1–24 is disordered; it reads MSQPPINPLGQPQVPAAASPSGQP. A run of 4 helical transmembrane segments spans residues 54-74, 79-99, 117-137, and 143-163; these read VYDT…LLTA, LMLY…TLLI, AIVV…GAFV, and MLVF…LYFM. Residues 211-228 are compositionally biased toward basic and acidic residues; it reads DLSASARMEEHEASQRQD. Disordered regions lie at residues 211–283 and 308–417; these read DLSA…FKDD and IMPA…RKNK. A compositionally biased stretch (polar residues) spans 312–322; sequence SSRSPNFSTGT. The span at 336 to 347 shows a compositional bias: low complexity; sequence EPSIPRVSSSSR. The segment covering 391 to 401 has biased composition (polar residues); that stretch reads STANLSPSNPF.

This sequence belongs to the chlamydial CPn_0443/CT_005/TC_0273 family.

The protein resides in the cell membrane. This is an uncharacterized protein from Chlamydia pneumoniae (Chlamydophila pneumoniae).